The primary structure comprises 207 residues: ATP-dependent Clp protease proteolytic subunit (207 aa).

Catalysis depends on Ser-111, which acts as the Nucleophile. His-136 is an active-site residue.

This sequence belongs to the peptidase S14 family. As to quaternary structure, fourteen ClpP subunits assemble into 2 heptameric rings which stack back to back to give a disk-like structure with a central cavity, resembling the structure of eukaryotic proteasomes. Component of the ClpAP and ClpXP complexes.

Its subcellular location is the cytoplasm. The enzyme catalyses Hydrolysis of proteins to small peptides in the presence of ATP and magnesium. alpha-casein is the usual test substrate. In the absence of ATP, only oligopeptides shorter than five residues are hydrolyzed (such as succinyl-Leu-Tyr-|-NHMec, and Leu-Tyr-Leu-|-Tyr-Trp, in which cleavage of the -Tyr-|-Leu- and -Tyr-|-Trp bonds also occurs).. Its function is as follows. Cleaves peptides in various proteins in a process that requires ATP hydrolysis. Has a chymotrypsin-like activity. Plays a major role in the degradation of misfolded proteins. The sequence is that of ATP-dependent Clp protease proteolytic subunit from Escherichia coli O139:H28 (strain E24377A / ETEC).